Here is a 243-residue protein sequence, read N- to C-terminus: Max-interacting protein 1 (243 aa).

The bHLH domain maps to 76 to 128 (HYRSTHNELEKNRRAHLRLCLERLKTLIPLGPECSRHTTLGLLNKAKAHIKKL). Residues 164–235 (EAERIRTDSM…TASDEGYSSC (72 aa)) are disordered. The span at 188-198 (DQEEMEVDVES) shows a compositional bias: acidic residues. Positions 222–235 (SLQSTASDEGYSSC) are enriched in polar residues.

As to quaternary structure, efficient DNA binding requires dimerization with another bHLH protein. Binds DNA as a heterodimer with MAX.

It localises to the nucleus. Its function is as follows. Transcriptional repressor. MXI1 binds with MAX to form a sequence-specific DNA-binding protein complex which recognizes the core sequence 5'-CAC[GA]TG-3'. MXI1 thus antagonizes MYC transcriptional activity by competing for MAX. This is Max-interacting protein 1 (mxi1) from Danio rerio (Zebrafish).